Here is a 448-residue protein sequence, read N- to C-terminus: Tubulin beta-1 chain (448 aa).

Residues glutamine 11, glutamate 69, serine 138, glycine 142, threonine 143, glycine 144, asparagine 204, and asparagine 226 each contribute to the GTP site. Glutamate 69 contacts Mg(2+). The segment at 428–448 (AGIGDDEEEDEEGVMGEEIDA) is disordered. Residues 430–448 (IGDDEEEDEEGVMGEEIDA) show a composition bias toward acidic residues.

The protein belongs to the tubulin family. In terms of assembly, dimer of alpha and beta chains. A typical microtubule is a hollow water-filled tube with an outer diameter of 25 nm and an inner diameter of 15 nM. Alpha-beta heterodimers associate head-to-tail to form protofilaments running lengthwise along the microtubule wall with the beta-tubulin subunit facing the microtubule plus end conferring a structural polarity. Microtubules usually have 13 protofilaments but different protofilament numbers can be found in some organisms and specialized cells. Requires Mg(2+) as cofactor.

The protein resides in the cytoplasm. It localises to the cytoskeleton. Its function is as follows. Tubulin is the major constituent of microtubules, a cylinder consisting of laterally associated linear protofilaments composed of alpha- and beta-tubulin heterodimers. Microtubules grow by the addition of GTP-tubulin dimers to the microtubule end, where a stabilizing cap forms. Below the cap, tubulin dimers are in GDP-bound state, owing to GTPase activity of alpha-tubulin. This Echinococcus multilocularis (Fox tapeworm) protein is Tubulin beta-1 chain (TUB-1).